We begin with the raw amino-acid sequence, 302 residues long: Nucleoside kinase (302 aa).

The substrate site is built by Asp17, Gln33, Gly43, and Asn47. Residue Gln109 participates in ATP binding. Residues 111-113 (TFF) and Gln163 contribute to the substrate site. ATP-binding positions include Asn186 and 214 to 219 (TKGSKG). Residue Asp247 coordinates substrate. Asp247 acts as the Proton acceptor in catalysis.

In terms of assembly, homodimer. Requires Mg(2+) as cofactor. Mn(2+) is required as a cofactor.

It catalyses the reaction cytidine + ATP = CMP + ADP + H(+). The catalysed reaction is guanosine + ATP = GMP + ADP + H(+). The enzyme catalyses inosine + ATP = IMP + ADP + H(+). Its function is as follows. Catalyzes the phosphorylation of a wide range of nucleosides to yield nucleoside monophosphates. Shows the highest activity for inosine, guanosine and cytidine, but very poor kinase activity with adenosine, thymidine, uridine and xanthosine. ATP is the best phosphate donor, but can also use ITP and GTP. Shows extremely low activity with fructose-6-phosphate. This chain is Nucleoside kinase, found in Methanocaldococcus jannaschii (strain ATCC 43067 / DSM 2661 / JAL-1 / JCM 10045 / NBRC 100440) (Methanococcus jannaschii).